Reading from the N-terminus, the 76-residue chain is Esculentin-2-ALb (76 aa).

A signal peptide spans 1–22 (MFTMKKSLLLLFFLGTISLSLC). Positions 23–39 (EEERSADEDDGEKGVKR) are excised as a propeptide. Cysteine 70 and cysteine 76 are oxidised to a cystine.

In terms of tissue distribution, expressed by the skin glands.

The protein resides in the secreted. Functionally, antimicrobial peptide with activity against Gram-positive and Gram-negative bacteria and against fungi. Has been tested against S.aureus (MIC=1.25 ug/mL), B.pumilus (MIC=2.5 ug/mL), B.cereus (MIC=7.5 ug/mL), E.coli (MIC=12.5 ug/mL), B.dysenteriae (MIC=7.5 ug/mL), A.cacoaceticus (MIC=12.5 ug/mL), P.aeruginosa (MIC=50.0 ug/mL) and C.albicans (MIC=2.5 ug/mL). Also shows a weak hemolytic activity. This is Esculentin-2-ALb from Amolops loloensis (Lolokou Sucker Frog).